We begin with the raw amino-acid sequence, 277 residues long: Caspase-3 (277 aa).

Met-1 is subject to N-acetylmethionine. 2 consecutive propeptides follow at residues 1-9 and 10-28; these read MENTENSVD and SKSI…ESMD. Lys-11 bears the N6-acetyllysine mark. Ser-26 bears the Phosphoserine mark. Residues His-121 and Cys-163 contribute to the active site. An S-nitrosocysteine; in inhibited form modification is found at Cys-163. Arg-207 is subject to (Microbial infection) ADP-riboxanated arginine.

Belongs to the peptidase C14A family. As to quaternary structure, heterotetramer that consists of two anti-parallel arranged heterodimers, each one formed by a 17 kDa (p17) and a 12 kDa (p12) subunit. Interacts with BIRC6/bruce. Cleavage by granzyme B, caspase-6, caspase-8 and caspase-10 generates the two active subunits. Additional processing of the propeptides is likely due to the autocatalytic activity of the activated protease. Active heterodimers between the small subunit of caspase-7 protease and the large subunit of caspase-3 also occur and vice versa. In terms of processing, S-nitrosylated on its catalytic site cysteine in unstimulated human cell lines and denitrosylated upon activation of the Fas apoptotic pathway, associated with an increase in intracellular caspase activity. Fas therefore activates caspase-3 not only by inducing the cleavage of the caspase zymogen to its active subunits, but also by stimulating the denitrosylation of its active site thiol. Post-translationally, ubiquitinated by BIRC6; this activity is inhibited by DIABLO/SMAC. (Microbial infection) ADP-riboxanation by C.violaceum CopC blocks CASP3 processing, preventing CASP3 activation and ability to recognize and cleave substrates. As to expression, highly expressed in lung, spleen, heart, liver and kidney. Moderate levels in brain and skeletal muscle, and low in testis. Also found in many cell lines, highest expression in cells of the immune system.

It is found in the cytoplasm. It catalyses the reaction Strict requirement for an Asp residue at positions P1 and P4. It has a preferred cleavage sequence of Asp-Xaa-Xaa-Asp-|- with a hydrophobic amino-acid residue at P2 and a hydrophilic amino-acid residue at P3, although Val or Ala are also accepted at this position.. With respect to regulation, inhibited by isatin sulfonamides. Inhibited by BIRC6; following inhibition of BIRC6-caspase binding by DIABLO/SMAC, BIRC6 is subjected to caspase cleavage, leading to an increase in active caspases. Its function is as follows. Thiol protease that acts as a major effector caspase involved in the execution phase of apoptosis. Following cleavage and activation by initiator caspases (CASP8, CASP9 and/or CASP10), mediates execution of apoptosis by catalyzing cleavage of many proteins. At the onset of apoptosis, it proteolytically cleaves poly(ADP-ribose) polymerase PARP1 at a '216-Asp-|-Gly-217' bond. Cleaves and activates sterol regulatory element binding proteins (SREBPs) between the basic helix-loop-helix leucine zipper domain and the membrane attachment domain. Cleaves and activates caspase-6, -7 and -9 (CASP6, CASP7 and CASP9, respectively). Cleaves and inactivates interleukin-18 (IL18). Involved in the cleavage of huntingtin. Triggers cell adhesion in sympathetic neurons through RET cleavage. Cleaves and inhibits serine/threonine-protein kinase AKT1 in response to oxidative stress. Acts as an inhibitor of type I interferon production during virus-induced apoptosis by mediating cleavage of antiviral proteins CGAS, IRF3 and MAVS, thereby preventing cytokine overproduction. Also involved in pyroptosis by mediating cleavage and activation of gasdermin-E (GSDME). Cleaves XRCC4 and phospholipid scramblase proteins XKR4, XKR8 and XKR9, leading to promote phosphatidylserine exposure on apoptotic cell surface. Cleaves BIRC6 following inhibition of BIRC6-caspase binding by DIABLO/SMAC. The polypeptide is Caspase-3 (CASP3) (Homo sapiens (Human)).